The sequence spans 165 residues: Hydroxyproline-rich systemin A (165 aa).

A signal peptide spans 1–18 (MRVLFLIYLILSPFGAEA). Positions 19 to 35 (RTLLENHEGLNVGSGYG) are excised as a propeptide. Disordered stretches follow at residues 33–70 (GYGR…TSEN) and 142–165 (YWNR…LHSY). 4-hydroxyproline occurs at positions 42, 43, 45, 49, and 50. Pro42, Pro43, Pro45, Pro49, and Pro50 each carry an O-linked (Ara...) hydroxyproline glycan. A propeptide spanning residues 54–143 (VSNSVSPTRT…FDSKSDERYW (90 aa)) is cleaved from the precursor. A 4-hydroxyproline mark is found at Pro150, Pro151, and Pro153. 3 O-linked (Ara...) hydroxyproline glycosylation sites follow: Pro150, Pro151, and Pro153. The propeptide occupies 162 to 165 (LHSY).

In terms of processing, O-glycosylated; contains pentose side chains. As to expression, expressed in leaves.

Its subcellular location is the secreted. Activates a lipid-based signal transduction pathway in which linolenic acid is converted to jasmonic acid, a potent activator of defense gene transcription, including proteinase inhibitors. The sequence is that of Hydroxyproline-rich systemin A from Nicotiana tabacum (Common tobacco).